A 283-amino-acid polypeptide reads, in one-letter code: Pantothenate synthetase (283 aa).

Position 30-37 (Met30–His37) interacts with ATP. The active-site Proton donor is His37. Residue Gln61 participates in (R)-pantoate binding. Gln61 contacts beta-alanine. Gly149–Asp152 is an ATP binding site. Gln155 is a binding site for (R)-pantoate. ATP is bound by residues Val178 and Phe186–Arg189.

Belongs to the pantothenate synthetase family. As to quaternary structure, homodimer.

The protein resides in the cytoplasm. It carries out the reaction (R)-pantoate + beta-alanine + ATP = (R)-pantothenate + AMP + diphosphate + H(+). The protein operates within cofactor biosynthesis; (R)-pantothenate biosynthesis; (R)-pantothenate from (R)-pantoate and beta-alanine: step 1/1. Functionally, catalyzes the condensation of pantoate with beta-alanine in an ATP-dependent reaction via a pantoyl-adenylate intermediate. The chain is Pantothenate synthetase from Proteus mirabilis (strain HI4320).